Here is a 24-residue protein sequence, read N- to C-terminus: RuBisCO large subunit-binding protein subunit beta, chloroplastic (24 aa).

Belongs to the chaperonin (HSP60) family. In terms of assembly, oligomer of probably six alpha and six beta subunits.

Its subcellular location is the plastid. The protein resides in the chloroplast. In terms of biological role, this protein binds RuBisCO small and large subunits and is implicated in the assembly of the enzyme oligomer. The chain is RuBisCO large subunit-binding protein subunit beta, chloroplastic from Populus euphratica (Euphrates poplar).